Reading from the N-terminus, the 386-residue chain is Heat-inducible transcription repressor HrcA (386 aa).

Belongs to the HrcA family.

Functionally, negative regulator of class I heat shock genes (grpE-dnaK-dnaJ and groELS operons). Prevents heat-shock induction of these operons. This chain is Heat-inducible transcription repressor HrcA, found in Chlamydia felis (strain Fe/C-56) (Chlamydophila felis).